Reading from the N-terminus, the 153-residue chain is Aspartate carbamoyltransferase regulatory chain (153 aa).

4 residues coordinate Zn(2+): Cys109, Cys114, Cys138, and Cys141.

Belongs to the PyrI family. In terms of assembly, contains catalytic and regulatory chains. Requires Zn(2+) as cofactor.

Its function is as follows. Involved in allosteric regulation of aspartate carbamoyltransferase. The sequence is that of Aspartate carbamoyltransferase regulatory chain from Salmonella newport (strain SL254).